The chain runs to 120 residues: Neuromedin-B (120 aa).

Positions 1–29 (MSAVPLTRMLPLRFLTHLLLLSFIPLYFC) are cleaved as a signal peptide. Positions 30–44 (MEFSEDARNIEKIRR) are excised as a propeptide. Met-54 is modified (methionine amide). Residues 58 to 120 (SLQDTYNPSE…MDDYIKTTQK (63 aa)) constitute a propeptide that is removed on maturation.

It belongs to the bombesin/neuromedin-B/ranatensin family. In terms of tissue distribution, brain, intestine, and ovaries and early embryos (stages 2 and 10).

It localises to the secreted. Functionally, stimulates smooth muscle contraction. In Xenopus laevis (African clawed frog), this protein is Neuromedin-B (nmb).